The primary structure comprises 226 residues: Large ribosomal subunit protein uL1 (226 aa).

This sequence belongs to the universal ribosomal protein uL1 family. As to quaternary structure, part of the 50S ribosomal subunit.

Functionally, binds directly to 23S rRNA. The L1 stalk is quite mobile in the ribosome, and is involved in E site tRNA release. Protein L1 is also a translational repressor protein, it controls the translation of the L11 operon by binding to its mRNA. In Treponema pallidum (strain Nichols), this protein is Large ribosomal subunit protein uL1.